Consider the following 511-residue polypeptide: Histidine ammonia-lyase 2 (511 aa).

The 5-imidazolinone (Ser-Gly) cross-link spans 144-146 (SSG). The residue at position 145 (serine 145) is a 2,3-didehydroalanine (Ser).

It belongs to the PAL/histidase family. Post-translationally, contains an active site 4-methylidene-imidazol-5-one (MIO), which is formed autocatalytically by cyclization and dehydration of residues Ser-Ser-Gly.

The protein localises to the cytoplasm. The catalysed reaction is L-histidine = trans-urocanate + NH4(+). It participates in amino-acid degradation; L-histidine degradation into L-glutamate; N-formimidoyl-L-glutamate from L-histidine: step 1/3. The chain is Histidine ammonia-lyase 2 (hutH2) from Fusobacterium nucleatum subsp. nucleatum (strain ATCC 25586 / DSM 15643 / BCRC 10681 / CIP 101130 / JCM 8532 / KCTC 2640 / LMG 13131 / VPI 4355).